The sequence spans 355 residues: Glucose-6-phosphatase 2 (355 aa).

Over 1–24 the chain is Lumenal; that stretch reads MDFLHRNGVLIIQHLQKDYRAYYT. The chain crosses the membrane as a helical span at residues 25 to 45; it reads FLNFMSNVGDPRNIFFIYFPL. Topologically, residues 46-56 are cytoplasmic; sequence CFQFNQTVGTK. A helical membrane pass occupies residues 57-77; that stretch reads MIWVAVIGDWLNLIFKWILFG. Topologically, residues 78–115 are lumenal; it reads HRPYWWVQETQIYPNHSSPCLEQFPTTCETGPGSPSGH. R79 serves as a coordination point for substrate. N92 is a glycosylation site (N-linked (GlcNAc...) asparagine). H115 acts as the Proton donor in catalysis. A helical transmembrane segment spans residues 116–136; sequence AMGASCVWYVMVTAALSHTVC. The Cytoplasmic portion of the chain corresponds to 137 to 146; sequence GMDKFSITLH. Residues 147 to 167 traverse the membrane as a helical segment; sequence RLTWSFLWSVFWLIQISVCIS. R168 is a topological domain (lumenal). R168 contacts substrate. The helical transmembrane segment at 169-189 threads the bilayer; that stretch reads VFIATHFPHQVILGVIGGMLV. H174 serves as the catalytic Nucleophile. The Cytoplasmic segment spans residues 190–211; that stretch reads AEAFEHTPGIQTASLGTYLKTN. The chain crosses the membrane as a helical span at residues 212 to 232; sequence LFLFLFAVGFYLLLRVLNIDL. Topologically, residues 233-261 are lumenal; sequence LWSVPIAKKWCANPDWIHIDTTPFAGLVR. The helical transmembrane segment at 262–282 threads the bilayer; the sequence is NLGVLFGLGFAINSEMFLLSC. Residues 283–293 are Cytoplasmic-facing; that stretch reads RGGNNYTLSFR. The helical transmembrane segment at 294-314 threads the bilayer; that stretch reads LLCALTSLTILQLYHFLQIPT. Residues 315–318 are Lumenal-facing; it reads HEEH. A helical membrane pass occupies residues 319 to 339; it reads LFYVLSFCKSASIPLTVVAFI. The Cytoplasmic portion of the chain corresponds to 340 to 355; sequence PYSVHMLMKQSGKKSQ. The short motif at 352–355 is the Prevents secretion from ER element; it reads KKSQ.

Belongs to the glucose-6-phosphatase family. Post-translationally, N-glycosylated; the non-glycosylated form is more unstable and is degraded through the proteasome. As to expression, specifically expressed in pancreas and also detected to a lower extent in testis. Expressed by most islet cells in the pancreas (at protein level).

The protein resides in the endoplasmic reticulum membrane. It carries out the reaction D-glucose 6-phosphate + H2O = D-glucose + phosphate. The protein operates within carbohydrate biosynthesis; gluconeogenesis. May hydrolyze glucose-6-phosphate to glucose in the endoplasmic reticulum. May be responsible for glucose production through glycogenolysis and gluconeogenesis. This is Glucose-6-phosphatase 2 (G6PC2) from Homo sapiens (Human).